Reading from the N-terminus, the 278-residue chain is Elongation factor Ts 2, mitochondrial (278 aa).

Belongs to the EF-Ts family.

It is found in the mitochondrion. Associates with the EF-Tu.GDP complex and induces the exchange of GDP to GTP. It remains bound to the aminoacyl-tRNA.EF-Tu.GTP complex up to the GTP hydrolysis stage on the ribosome. This Trypanosoma cruzi (strain CL Brener) protein is Elongation factor Ts 2, mitochondrial.